A 356-amino-acid chain; its full sequence is C-C chemokine receptor 1-like protein 1 (356 aa).

At 1–32 (MEIPAVTEPSYNTVAKNDFMSGFLCFSINVRA) the chain is on the extracellular side. A helical membrane pass occupies residues 33 to 60 (FGITVLTPLYSLVFIIGVIGHVLVVLVL). The Cytoplasmic portion of the chain corresponds to 61-67 (IQHKRLR). A helical membrane pass occupies residues 68-92 (NMTSIYLFNLAISDLVFLSTLPFWV). Over 93–108 (DYIMKGDWIFGNAMCK) the chain is Extracellular. Residues Cys107 and Cys184 are joined by a disulfide bond. A helical transmembrane segment spans residues 109–130 (FVSGFYYLGLYSDMFFITLLTI). Topologically, residues 131 to 147 (DRYLAVVHVVFALRART) are cytoplasmic. A helical transmembrane segment spans residues 148-172 (VTFGIISSIITWVLAALVSIPCLYV). Residues 173 to 198 (FKSQMEFTYHTCRAILPRKSLIRFLR) lie on the Extracellular side of the membrane. Residues 199–224 (FQALTMNILGLILPLLAMIICYTRII) form a helical membrane-spanning segment. Topologically, residues 225-240 (NVLHRRPNKKKAKVMR) are cytoplasmic. Residues 241–265 (LIFVITLLFFLLLAPYYLAAFVSAF) traverse the membrane as a helical segment. The Extracellular portion of the chain corresponds to 266–282 (EDVLFTPSCLRSQQVDL). The helical transmembrane segment at 283–306 (SLMITEALAYTHCCVNPVIYVFVG) threads the bilayer. The Cytoplasmic segment spans residues 307-356 (KRFRKYLWQLFRRHTAITLPQWLPFLSVDRAQRASATPPSTVEIETSADL).

It belongs to the G-protein coupled receptor 1 family. In terms of tissue distribution, detected in the spleen, liver and leukocytes.

Its subcellular location is the cell membrane. Probable receptor for a C-C type chemokine. In Mus musculus (Mouse), this protein is C-C chemokine receptor 1-like protein 1 (Ccr1l1).